The sequence spans 238 residues: Bacterial microcompartment shell protein PduB (238 aa).

2 BMC circularly permuted domains span residues 14–125 and 126–225; these read FVGA…VYNA and KAGH…LSQF. Cysteines 158 and 197 form a disulfide.

The protein belongs to the EutL/PduB family. In terms of assembly, homotrimerizes to form a pseudohexamer with a central pore 7.5 Angstroms wide and 22 Angstroms long; the pore channel in the crystal binds up to 4 glycerol molecules. A disulfide bond forms in the pore, it is not clear if this is an artifact. The trimers pack into an array.

Its subcellular location is the bacterial microcompartment. It functions in the pathway polyol metabolism; 1,2-propanediol degradation. Functionally, one of the major shell proteins of the bacterial microcompartment (BMC) dedicated to 1,2-propanediol (1,2-PD) degradation. Probably involved in a propanediol fermentation/reuterin formation pathway. The polypeptide is Bacterial microcompartment shell protein PduB (Limosilactobacillus reuteri (strain DSM 20016) (Lactobacillus reuteri)).